A 379-amino-acid chain; its full sequence is Fucose-specific lectin g276 (379 aa).

Glu-126 is an alpha-L-fucose binding site. Positions 126, 163, and 185 each coordinate beta-L-fucose. Alpha-L-fucose is bound by residues Trp-185, Arg-222, and Glu-234. Residues Trp-242 and Glu-282 each contribute to the beta-L-fucose site. Residue Trp-289 coordinates alpha-L-fucose.

The protein belongs to the fungal fucose-specific lectin family.

Lectin that specifically binds to L-fucose. Is associated with the morphogenesis of the fungus, and plays a role in the formation of the constricting rings involved in nematode-trapping. This is Fucose-specific lectin g276 from Arthrobotrys oligospora (strain ATCC 24927 / CBS 115.81 / DSM 1491) (Nematode-trapping fungus).